A 427-amino-acid polypeptide reads, in one-letter code: Inward rectifier potassium channel 2 (427 aa).

The Cytoplasmic segment spans residues 1–81; that stretch reads MGSVRTNRYS…IFTTCVDIRW (81 aa). C76 carries the post-translational modification S-nitrosocysteine. Residues 82 to 106 form a helical membrane-spanning segment; sequence RWMLVIFCLAFVLSWLFFGCVFWLI. The Extracellular portion of the chain corresponds to 107–128; that stretch reads ALLHGDLDASKESKACVSEVNS. The segment at residues 129 to 140 is an intramembrane region (helical; Pore-forming); the sequence is FTAAFLFSIETQ. The pore-forming intramembrane region spans 141–147; that stretch reads TTIGYGF. The Selectivity filter signature appears at 142–147; it reads TIGYGF. The Extracellular portion of the chain corresponds to 148-156; the sequence is RCVTDECPV. A helical membrane pass occupies residues 157–178; that stretch reads AVFMVVFQSIVGCIIDAFIIGA. The Cytoplasmic portion of the chain corresponds to 179–427; it reads VMAKMAKPKK…PRPLRRESEI (249 aa). A polyphosphoinositide (PIP2)-binding region spans residues 181–208; it reads AKMAKPKKRNETLVFSHNAVIAMRDGKL. The interval 384–427 is disordered; the sequence is SKEEDDSENGVPESTSTDTPPDIDLHNQASVPLEPRPLRRESEI. The PDZ-binding signature appears at 425–427; sequence SEI.

It belongs to the inward rectifier-type potassium channel (TC 1.A.2.1) family. KCNJ2 subfamily. In terms of assembly, homotetramer. Homomultimeric and heteromultimeric association with KCNJ4/Kir2.3. Can form heteromeric channels with Kir2.6/KCNJ18. Associates, via its PDZ-recognition domain, with a complex containing LIN7A, LIN7B, LIN7C, DLG1, CASK and APBA1. Post-translationally, S-nitrosylation increases the open probability and inward rectifying currents.

Its subcellular location is the cell membrane. It is found in the sarcolemma. The protein localises to the T-tubule. It carries out the reaction K(+)(in) = K(+)(out). With respect to regulation, activated by phosphatidylinositol 4,5 biphosphate (PtdIns(4,5)P2). Its function is as follows. Inward rectifier potassium channels are characterized by a greater tendency to allow potassium to flow into the cell rather than out of it. Their voltage dependence is regulated by the concentration of extracellular potassium; as external potassium is raised, the voltage range of the channel opening shifts to more positive voltages. The inward rectification is mainly due to the blockage of outward current by internal magnesium. Can be blocked by extracellular barium and cesium. Probably participates in establishing action potential waveform and excitability of neuronal and muscle tissues. The protein is Inward rectifier potassium channel 2 (KCNJ2) of Bos taurus (Bovine).